Reading from the N-terminus, the 672-residue chain is DNA mismatch repair protein MutL (672 aa).

Over residues 443-454 the composition is skewed to polar residues; sequence SYTSDSNQYENS. Residues 443-469 are disordered; that stretch reads SYTSDSNQYENSCKSDVDKESKSKTTG. A compositionally biased stretch (basic and acidic residues) spans 455–465; sequence CKSDVDKESKS.

Belongs to the DNA mismatch repair MutL/HexB family.

This protein is involved in the repair of mismatches in DNA. It is required for dam-dependent methyl-directed DNA mismatch repair. May act as a 'molecular matchmaker', a protein that promotes the formation of a stable complex between two or more DNA-binding proteins in an ATP-dependent manner without itself being part of a final effector complex. The sequence is that of DNA mismatch repair protein MutL from Clostridium botulinum (strain Eklund 17B / Type B).